The following is a 383-amino-acid chain: Inactive serine protease 54 (383 aa).

The signal sequence occupies residues 1 to 20 (MAEMRGMLLMLLYISHSSSA). The Peptidase S1 domain occupies 21–258 (ICGIQKATIA…YSDWITAKTR (238 aa)). N113 carries an N-linked (GlcNAc...) asparagine glycan. Cystine bridges form between C154–C216, C185–C195, and C206–C237. The interval 305-334 (QGQRMSTKSNKQKDAGQNFRVNRQPETSGP) is disordered. Polar residues predominate over residues 323–334 (FRVNRQPETSGP).

Belongs to the peptidase S1 family. Plasma kallikrein subfamily.

It localises to the secreted. In Mus musculus (Mouse), this protein is Inactive serine protease 54 (Prss54).